The sequence spans 305 residues: Putative glutamine amidotransferase MTH_191 (305 aa).

The active site involves C2. The 304-residue stretch at 2 to 305 (CGIAGVVYKD…SPGEVRVYEI (304 aa)) folds into the Glutamine amidotransferase type-2 domain.

The polypeptide is Putative glutamine amidotransferase MTH_191 (Methanothermobacter thermautotrophicus (strain ATCC 29096 / DSM 1053 / JCM 10044 / NBRC 100330 / Delta H) (Methanobacterium thermoautotrophicum)).